A 335-amino-acid chain; its full sequence is NmrA-like family domain-containing oxidoreductase lnbB (335 aa).

Residues Gly14 to Gln18, Arg41 to Ser45, Asp62 to Gly63, Thr83 to Ser85, Lys142, and Tyr166 to Gln169 each bind NADP(+).

It belongs to the NmrA-type oxidoreductase family.

It functions in the pathway secondary metabolite biosynthesis. NmrA-like family domain-containing oxidoreductase; part of the lnb gene cluster that mediates the biosynthesis of diastereomeric piperazines. Lna and lnb clusters encode sets of enzymes that produce overlapping sets of previously undescribed metabolites such as piperazinomycin-like metabolites or morpholine. The lna and lnb biosynthetic pathways appear to be part of a signaling network that controls the formation of sclerotia, a resilient overwintering structure. One primary function of the non-canonical nonribosomal peptide synthetases lnaA and lnbA consists in the reduction of L-tyrosine. The presence in the clusters of tailoring enzymes such as the oxidoreductases lnaB, lnbB, lnaE or lnbE, as well as of the cytochrome P450 monooxygenases lnaC, lnaD, or lnbC, might explain formation of various diastereomeric piperazines. This is NmrA-like family domain-containing oxidoreductase lnbB from Aspergillus flavus (strain ATCC 200026 / FGSC A1120 / IAM 13836 / NRRL 3357 / JCM 12722 / SRRC 167).